A 598-amino-acid polypeptide reads, in one-letter code: IQ calmodulin-binding motif-containing protein 1 (598 aa).

Residues 1–157 (MKPAGTDPRI…SLFWLLGGHV (157 aa)) form an interaction with BBS1, BBS8 and BBS9 region. An interaction with CEP290, BBS1, BBS2, BBS4, BBS5, BBS7, BBS8 and BBS9 region spans residues 287–598 (QEVEEQKLHK…MLFIGGTKPP (312 aa)). IQ domains lie at 294–317 (LHKAACLIQAYWKGFQTRKRLKKL), 318–338 (PSAVIALQRSFRSKRTKMMLE), 387–416 (EEKSALTIQKHWRGYRERKNFRQQRPSLTE), and 417–437 (YKAAVTLQRAVLKFLAKCRKK). Positions 336–362 (MLELNRQKEEEDLRLKLQLQRQRAMRL) form a coiled coil. The interaction with BBS1, BBS2, BBS4, BBS7, BBS8 and BBS9 stretch occupies residues 530–598 (AEGKEPEQFL…MLFIGGTKPP (69 aa)).

In terms of assembly, interacts with calmodulin. Interacts with CEP290/NPHP6; IQCB1/NPHP5 and CEP290/NPHP6; are proposed to form a functional NPHP5-6 module localized to the centrosome. Interacts with ATXN10. Interacts with NPHP1, INVS, NPHP4 and RPGRIP1L; these interactions likely require additional interactors. Associates with the BBSome complex; interacts with BBS1, BBS2, BBS4, BBS5, BBS7, BBS8 and BBS9. Localized to the outer segment and connecting cilia of photoreceptor cells.

The protein localises to the cytoplasm. It is found in the cytoskeleton. Its subcellular location is the microtubule organizing center. The protein resides in the centrosome. Its function is as follows. Involved in ciliogenesis. The function in an early step in cilia formation depends on its association with CEP290/NPHP6. Involved in regulation of the BBSome complex integrity, specifically for presence of BBS2 and BBS5 in the complex, and in ciliary targeting of selected BBSome cargos. May play a role in controlling entry of the BBSome complex to cilia possibly implicating CEP290/NPHP6. This Mus musculus (Mouse) protein is IQ calmodulin-binding motif-containing protein 1 (Iqcb1).